We begin with the raw amino-acid sequence, 186 residues long: ATP synthase subunit delta (186 aa).

Belongs to the ATPase delta chain family. As to quaternary structure, F-type ATPases have 2 components, F(1) - the catalytic core - and F(0) - the membrane proton channel. F(1) has five subunits: alpha(3), beta(3), gamma(1), delta(1), epsilon(1). F(0) has three main subunits: a(1), b(2) and c(10-14). The alpha and beta chains form an alternating ring which encloses part of the gamma chain. F(1) is attached to F(0) by a central stalk formed by the gamma and epsilon chains, while a peripheral stalk is formed by the delta and b chains.

Its subcellular location is the cell inner membrane. F(1)F(0) ATP synthase produces ATP from ADP in the presence of a proton or sodium gradient. F-type ATPases consist of two structural domains, F(1) containing the extramembraneous catalytic core and F(0) containing the membrane proton channel, linked together by a central stalk and a peripheral stalk. During catalysis, ATP synthesis in the catalytic domain of F(1) is coupled via a rotary mechanism of the central stalk subunits to proton translocation. In terms of biological role, this protein is part of the stalk that links CF(0) to CF(1). It either transmits conformational changes from CF(0) to CF(1) or is implicated in proton conduction. In Nitrobacter hamburgensis (strain DSM 10229 / NCIMB 13809 / X14), this protein is ATP synthase subunit delta.